The chain runs to 435 residues: Arginine biosynthesis bifunctional protein ArgJ, mitochondrial (435 aa).

The substrate site is built by threonine 167, lysine 193, threonine 204, glutamate 291, asparagine 430, and threonine 435. The active-site Nucleophile is threonine 204.

It belongs to the ArgJ family. Heterodimer of an alpha and a beta chain. In terms of processing, the alpha and beta chains are autoproteolytically processed from a single precursor protein within the mitochondrion.

Its subcellular location is the mitochondrion matrix. The catalysed reaction is N(2)-acetyl-L-ornithine + L-glutamate = N-acetyl-L-glutamate + L-ornithine. The enzyme catalyses L-glutamate + acetyl-CoA = N-acetyl-L-glutamate + CoA + H(+). It participates in amino-acid biosynthesis; L-arginine biosynthesis; L-ornithine and N-acetyl-L-glutamate from L-glutamate and N(2)-acetyl-L-ornithine (cyclic): step 1/1. It functions in the pathway amino-acid biosynthesis; L-arginine biosynthesis; N(2)-acetyl-L-ornithine from L-glutamate: step 1/4. Catalyzes two activities which are involved in the cyclic version of arginine biosynthesis: the synthesis of acetylglutamate from glutamate and acetyl-CoA, and of ornithine by transacetylation between acetylornithine and glutamate. This Heterostelium pallidum (strain ATCC 26659 / Pp 5 / PN500) (Cellular slime mold) protein is Arginine biosynthesis bifunctional protein ArgJ, mitochondrial.